The primary structure comprises 60 residues: Large ribosomal subunit protein uL30 (60 aa).

The protein belongs to the universal ribosomal protein uL30 family. In terms of assembly, part of the 50S ribosomal subunit.

The sequence is that of Large ribosomal subunit protein uL30 from Streptococcus equi subsp. equi (strain 4047).